Here is a 532-residue protein sequence, read N- to C-terminus: Glycerophosphocholine permease GIT4 (532 aa).

6 helical membrane passes run 55 to 75, 98 to 118, 126 to 146, 150 to 170, 201 to 221, and 229 to 249; these read LWPAFASGAGLFSDGYVNAGI, NIGSIGFVGTVVGQLSFGYIS, GMLTANVMLIFFTLMCAVASW, VQGFFACLTVWRFFLGIAIGA, AMIDFGFVVSSFVPLVLLWIF, and VWRLSIGLGVIPPLILFFIRL. The N-linked (GlcNAc...) asparagine glycan is linked to Asn-266. The helical transmembrane segment at 272 to 292 threads the bilayer; the sequence is WWLIIKFYWFRLTVVSLIWFI. An N-linked (GlcNAc...) asparagine glycan is attached at Asn-314. A run of 3 helical transmembrane segments spans residues 321 to 341, 349 to 369, and 375 to 395; these read WGWSVVFNLFYMPGAFLGAFI, LTLAIGVGAQGIIGIAMSACL, and HVAGFVVVFGIFSTFGEFGPG. The N-linked (GlcNAc...) asparagine glycan is linked to Asn-396. Transmembrane regions (helical) follow at residues 416-436 and 450-470; these read GIAAAIGKIGAFVGTWVFPAI and VPFYVSSALCLFSAFLTIFFV.

The protein belongs to the major facilitator superfamily. Sugar transporter (TC 2.A.1.1) family.

Its subcellular location is the cell membrane. It carries out the reaction sn-glycerol 3-phosphocholine(out) = sn-glycerol 3-phosphocholine(in). In terms of biological role, glycerophosphodiester transporter that mediates uptake of glycerophosphocholine (GroPCho) with GIT3. Does not possess detectable glycerophosphoinositol (GroPIns) transport activity. The expanded ability to utilize GroPIns and GroPCho results from the organism's pathogenic nature and its need to occupy a variety of environments within its host organism. This possibility is buttressed by the fact that GroPIns and GroPCho are present and abundant in human fluids. The sequence is that of Glycerophosphocholine permease GIT4 from Candida albicans (strain SC5314 / ATCC MYA-2876) (Yeast).